Reading from the N-terminus, the 1848-residue chain is Unconventional myosin-Vb (1848 aa).

Met1 bears the N-acetylmethionine mark. A Myosin N-terminal SH3-like domain is found at 8-60 (SQCTRVWIPDPDEVWRSAELTKDYKEGDKSLQLRLEDETILEYPIDVQRNQLP). The segment at 21-40 (VWRSAELTKDYKEGDKSLQL) is requires for interaction with LIMA1. One can recognise a Myosin motor domain in the interval 69–761 (VGENDLTALS…QVAYLEKLRA (693 aa)). 163–170 (GESGAGKT) lines the ATP pocket. The segment at 596 to 630 (KDPVPATTPGKGSSSKISVRSARPPMKVSNKEHKK) is disordered. Residues 640 to 662 (LHLLMETLNATTPHYVRCIKPND) form an actin-binding region. IQ domains lie at 769 to 798 (IMIQ…QRYC), 792 to 821 (LTLQ…VLQK), 817 to 848 (VVLQ…FTRA), 840 to 869 (VVIQ…TIQK), 865 to 896 (TTIQ…AFRM), and 888 to 917 (IVIQ…EHLK). Coiled coils occupy residues 899–1266 (ARRE…ILRT) and 1341–1471 (RLLE…GMLE). 2 disordered regions span residues 1093 to 1123 (QTPG…EIGD) and 1166 to 1192 (QLEK…LDPN). A compositionally biased stretch (polar residues) spans 1101 to 1121 (PSNQSSLESDSNYPSISTSEI). Residues 1166-1179 (QLEKREQQDSKKVQ) show a composition bias toward basic and acidic residues. A Phosphoserine modification is found at Ser1446. The Dilute domain maps to 1526–1803 (TSTINGIKKV…IRTIQAQLQE (278 aa)).

It belongs to the TRAFAC class myosin-kinesin ATPase superfamily. Myosin family. Component of the CART complex, at least composed of ACTN4, HGS/HRS, MYO5B and TRIM3. Interacts with RAB11FIP2, RAB11A, and RAB8A. Found in a complex with CFTR and RAB11A. Interacts with NPC1L1;. Interacts with LIMA1.

The protein localises to the cytoplasm. May be involved in vesicular trafficking via its association with the CART complex. The CART complex is necessary for efficient transferrin receptor recycling but not for EGFR degradation. Required in a complex with RAB11A and RAB11FIP2 for the transport of NPC1L1 to the plasma membrane. Together with RAB11A participates in CFTR trafficking to the plasma membrane and TF (transferrin) recycling in nonpolarized cells. Together with RAB11A and RAB8A participates in epithelial cell polarization. Together with RAB25 regulates transcytosis. Required for proper localization of bile salt export pump ABCB11 at the apical/canalicular plasma membrane of hepatocytes. This Homo sapiens (Human) protein is Unconventional myosin-Vb (MYO5B).